A 102-amino-acid chain; its full sequence is Small ribosomal subunit protein uS10 (102 aa).

It belongs to the universal ribosomal protein uS10 family. In terms of assembly, part of the 30S ribosomal subunit.

Its function is as follows. Involved in the binding of tRNA to the ribosomes. This chain is Small ribosomal subunit protein uS10, found in Pyrococcus abyssi (strain GE5 / Orsay).